The primary structure comprises 404 residues: Advanced glycosylation end product-specific receptor (404 aa).

The N-terminal stretch at 1–22 (MAAGTAVGAWVLVLSLWGAVVG) is a signal peptide. The region spanning 23–116 (AQNITARIGE…KETKSNYRVR (94 aa)) is the Ig-like V-type domain. At 23–342 (AQNITARIGE…VGGSGLGTLA (320 aa)) the chain is on the extracellular side. Asn25 and Asn81 each carry an N-linked (GlcNAc...) asparagine glycan. Disulfide bonds link Cys38/Cys99 and Cys144/Cys208. 2 consecutive Ig-like C2-type domains span residues 124–221 (PEIV…RALR) and 227–317 (PRVW…RAVS). A helical transmembrane segment spans residues 343 to 363 (LALGILGGLGTAALLIGVILW). Residues 364–404 (QRRQRRGEERKAPENQEEEEERAELNQSEEPEAGESSTGGP) lie on the Cytoplasmic side of the membrane. The tract at residues 367–404 (QRRGEERKAPENQEEEEERAELNQSEEPEAGESSTGGP) is disordered. A compositionally biased stretch (acidic residues) spans 378-396 (NQEEEEERAELNQSEEPEA). The residue at position 391 (Ser391) is a Phosphoserine; by PKC/PRKCZ and ATM.

Constitutive homodimer; disulfide-linked. Forms homooligomers. Interacts with S100A1 and APP. Interacts with S100B, S100A12 and S100A14. Interacts with TIRAP. Interacts with HMGB1. Interacts with LGP2; this interaction plays an important role in AGER-mediated pro-inflammatory responses and cytokine release. Interacts with double-strand break repair protein MRE11 which is a core component of the MRN complex. The interaction enhances MRE11 endonuclease activity and promotes DNA repair. Interacts with the MCM2-7 complex via interaction with complex member MCM2; the interaction is increased following DNA replication stress and stabilizes the MCM2-7 complex at replication forks. Interacts with longistatin, a protein from the saliva of the tick, Haemaphysalis longicornis; the interaction attenuates AGER-mediated production of reactive oxygen species (ROS), activation of NF-kappa-B and expression of adhesion molecules and cytokines in human endothelial cells. In terms of processing, phosphorylated on its cytoplasmic domain by PKCzeta/PRKCZ upon ligand binding. Phosphorylated by ATM following DNA damage. Post-translationally, targeted by the ubiquitin E3 ligase subunit FBXO10 to mediate its ubiquitination and degradation. In terms of tissue distribution, endothelial cells. Increased expression in pre-term labor and preeclampsia placentas compared to controls.

It localises to the cell membrane. Its subcellular location is the cell projection. It is found in the phagocytic cup. The protein resides in the early endosome. The protein localises to the nucleus. It localises to the secreted. Cell surface pattern recognition receptor that senses endogenous stress signals with a broad ligand repertoire including advanced glycation end products, S100 proteins, high-mobility group box 1 protein/HMGB1, amyloid beta/APP oligomers, nucleic acids, histones, phospholipids and glycosaminoglycans. Advanced glycosylation end products are nonenzymatically glycosylated proteins which accumulate in vascular tissue in aging and at an accelerated rate in diabetes. These ligands accumulate at inflammatory sites during the pathogenesis of various diseases including diabetes, vascular complications, neurodegenerative disorders and cancers, and RAGE transduces their binding into pro-inflammatory responses. Upon ligand binding, uses TIRAP and MYD88 as adapters to transduce the signal ultimately leading to the induction of inflammatory cytokines IL6, IL8 and TNFalpha through activation of NF-kappa-B. Interaction with S100A12 on endothelium, mononuclear phagocytes, and lymphocytes triggers cellular activation, with generation of key pro-inflammatory mediators. Interaction with S100B after myocardial infarction may play a role in myocyte apoptosis by activating ERK1/2 and p53/TP53 signaling. Contributes to the translocation of amyloid-beta peptide (ABPP) across the cell membrane from the extracellular to the intracellular space in cortical neurons. ABPP-initiated RAGE signaling, especially stimulation of p38 mitogen-activated protein kinase (MAPK), has the capacity to drive a transport system delivering ABPP as a complex with RAGE to the intraneuronal space. Participates in endothelial albumin transcytosis together with HMGB1 through the RAGE/SRC/Caveolin-1 pathway, leading to endothelial hyperpermeability. Mediates the loading of HMGB1 in extracellular vesicles (EVs) that shuttle HMGB1 to hepatocytes by transferrin-mediated endocytosis and subsequently promote hepatocyte pyroptosis by activating the NLRP3 inflammasome. Binds to DNA and promotes extracellular hypomethylated DNA (CpG DNA) uptake by cells via the endosomal route to activate inflammatory responses. Mediates phagocytosis by non-professional phagocytes (NPP) and this is enhanced by binding to ligands including RNA, DNA, HMGB1 and histones. Promotes NPP-mediated phagocytosis of Saccharomyces cerevisiae spores by binding to RNA attached to the spore wall. Also promotes NPP-mediated phagocytosis of apoptotic cells. Following DNA damage, recruited to DNA double-strand break sites where it colocalizes with the MRN repair complex via interaction with double-strand break repair protein MRE11. Enhances the endonuclease activity of MRE11, promoting the end resection of damaged DNA. Promotes DNA damage repair in trophoblasts which enhances trophoblast invasion and contributes to placental development and maintenance. Protects cells from DNA replication stress by localizing to damaged replication forks where it stabilizes the MCM2-7 complex and promotes faithful progression of the replication fork. Mediates the production of reactive oxygen species (ROS) in human endothelial cells. The polypeptide is Advanced glycosylation end product-specific receptor (AGER) (Homo sapiens (Human)).